Reading from the N-terminus, the 365-residue chain is IgG receptor FcRn large subunit p51 (365 aa).

The first 21 residues, 1-21 (MGMPLPWALSLLLVLLPQTWG), serve as a signal peptide directing secretion. The interval 22-110 (SETRPPLMYH…KTLEKILNGT (89 aa)) is alpha-1. Topologically, residues 22-297 (SETRPPLMYH…VDLDSSARSS (276 aa)) are extracellular. Asn108, Asn125, Asn149, and Asn246 each carry an N-linked (GlcNAc...) asparagine glycan. The interval 111–200 (YTLQGLLGCE…ERGRRNLEWK (90 aa)) is alpha-2. 2 disulfides stabilise this stretch: Cys119–Cys182 and Cys221–Cys275. Positions 201–290 (EPPSMRLKAR…GLAQPLTVDL (90 aa)) are alpha-3. One can recognise an Ig-like C1-type domain in the interval 202-289 (PPSMRLKARP…EGLAQPLTVD (88 aa)). The connecting peptide stretch occupies residues 291–297 (DSSARSS). A helical membrane pass occupies residues 298-321 (VPVVGIVLGLLLVVVAIAGGVLLW). The Cytoplasmic portion of the chain corresponds to 322 to 365 (GRMRSGLPAPWLSLSGDDSGDLLPGGNLPPEAEPQGANAFPATS). Ser334 is modified (phosphoserine). A disordered region spans residues 343 to 365 (LLPGGNLPPEAEPQGANAFPATS).

The protein belongs to the immunoglobulin superfamily. As to quaternary structure, fcRn complex consists of two subunits: p51, and p14 which is equivalent to beta-2-microglobulin. It forms an MHC class I-like heterodimer. Interacts with albumin/ALB; this interaction regulates ALB homeostasis. As to expression, intestinal epithelium of suckling rodents. Expressed in neonatal intestine and fetal yolk sac.

Its subcellular location is the cell membrane. The protein localises to the endosome membrane. Cell surface receptor that transfers passive humoral immunity from the mother to the newborn. Binds to the Fc region of monomeric immunoglobulin gamma and mediates its selective uptake from milk. IgG in the milk is bound at the apical surface of the intestinal epithelium. The resultant FcRn-IgG complexes are transcytosed across the intestinal epithelium and IgG is released from FcRn into blood or tissue fluids. Throughout life, contributes to effective humoral immunity by recycling IgG and extending its half-life in the circulation. Mechanistically, monomeric IgG binding to FcRn in acidic endosomes of endothelial and hematopoietic cells recycles IgG to the cell surface where it is released into the circulation. In addition of IgG, regulates homeostasis of the other most abundant circulating protein albumin/ALB. The chain is IgG receptor FcRn large subunit p51 (Fcgrt) from Mus musculus (Mouse).